Reading from the N-terminus, the 139-residue chain is Peptide methionine sulfoxide reductase MsrB (139 aa).

The 123-residue stretch at 9-131 (TPSDNTELTE…NSASLSFIDD (123 aa)) folds into the MsrB domain. The Zn(2+) site is built by Cys-48, Cys-51, Cys-97, and Cys-100. Cys-120 acts as the Nucleophile in catalysis.

The protein belongs to the MsrB Met sulfoxide reductase family. Requires Zn(2+) as cofactor.

It carries out the reaction L-methionyl-[protein] + [thioredoxin]-disulfide + H2O = L-methionyl-(R)-S-oxide-[protein] + [thioredoxin]-dithiol. This is Peptide methionine sulfoxide reductase MsrB from Pectobacterium carotovorum subsp. carotovorum (strain PC1).